The primary structure comprises 209 residues: LexA repressor (209 aa).

A DNA-binding region (H-T-H motif) is located at residues R30 to K50. Active-site for autocatalytic cleavage activity residues include S126 and K163.

It belongs to the peptidase S24 family. Homodimer.

The enzyme catalyses Hydrolysis of Ala-|-Gly bond in repressor LexA.. Its function is as follows. Represses a number of genes involved in the response to DNA damage (SOS response), including recA and lexA. In the presence of single-stranded DNA, RecA interacts with LexA causing an autocatalytic cleavage which disrupts the DNA-binding part of LexA, leading to derepression of the SOS regulon and eventually DNA repair. The chain is LexA repressor from Glaesserella parasuis serovar 5 (strain SH0165) (Haemophilus parasuis).